The following is an 89-amino-acid chain: Nitrogen regulatory protein (89 aa).

One can recognise a PTS EIIA type-2 domain in the interval 6–89 (TILTPGRSLV…ALLHLEAPID (84 aa)). The active-site Tele-phosphohistidine intermediate is His-68.

The protein localises to the cytoplasm. Functionally, seems to have a role in regulating nitrogen assimilation. This chain is Nitrogen regulatory protein (ptsN), found in Pseudomonas putida (Arthrobacter siderocapsulatus).